We begin with the raw amino-acid sequence, 468 residues long: Kynureninase 2 (468 aa).

Pyridoxal 5'-phosphate contacts are provided by residues Leu134, Thr135, 162 to 165 (FPSD), Asp247, His250, and Tyr272. Lys273 is modified (N6-(pyridoxal phosphate)lysine). Pyridoxal 5'-phosphate contacts are provided by Trp312 and Asn340.

Belongs to the kynureninase family. In terms of assembly, homodimer. The cofactor is pyridoxal 5'-phosphate.

It localises to the cytoplasm. The catalysed reaction is L-kynurenine + H2O = anthranilate + L-alanine + H(+). The enzyme catalyses 3-hydroxy-L-kynurenine + H2O = 3-hydroxyanthranilate + L-alanine + H(+). It participates in amino-acid degradation; L-kynurenine degradation; L-alanine and anthranilate from L-kynurenine: step 1/1. Its pathway is cofactor biosynthesis; NAD(+) biosynthesis; quinolinate from L-kynurenine: step 2/3. In terms of biological role, catalyzes the cleavage of L-kynurenine (L-Kyn) and L-3-hydroxykynurenine (L-3OHKyn) into anthranilic acid (AA) and 3-hydroxyanthranilic acid (3-OHAA), respectively. In Aspergillus oryzae (strain ATCC 42149 / RIB 40) (Yellow koji mold), this protein is Kynureninase 2 (bna5-2).